The chain runs to 158 residues: NAD(P)H-quinone oxidoreductase subunit J, chloroplastic (158 aa).

It belongs to the complex I 30 kDa subunit family. NDH is composed of at least 16 different subunits, 5 of which are encoded in the nucleus.

It localises to the plastid. It is found in the chloroplast thylakoid membrane. The enzyme catalyses a plastoquinone + NADH + (n+1) H(+)(in) = a plastoquinol + NAD(+) + n H(+)(out). It catalyses the reaction a plastoquinone + NADPH + (n+1) H(+)(in) = a plastoquinol + NADP(+) + n H(+)(out). Functionally, NDH shuttles electrons from NAD(P)H:plastoquinone, via FMN and iron-sulfur (Fe-S) centers, to quinones in the photosynthetic chain and possibly in a chloroplast respiratory chain. The immediate electron acceptor for the enzyme in this species is believed to be plastoquinone. Couples the redox reaction to proton translocation, and thus conserves the redox energy in a proton gradient. In Illicium oligandrum (Star anise), this protein is NAD(P)H-quinone oxidoreductase subunit J, chloroplastic.